The chain runs to 468 residues: GTPase Der (468 aa).

EngA-type G domains are found at residues 3–167 and 179–352; these read PTLV…PYAE and PVIA…TAAM. GTP-binding positions include 9-16, 56-60, 119-122, 185-192, 232-236, and 297-300; these read GRPNVGKS, DTGGF, NKAE, DTAGL, and NKWD. The region spanning 353-437 is the KH-like domain; it reads AHIPTPKLTR…PLRVEFRTGH (85 aa). A disordered region spans residues 434–468; the sequence is RTGHNPYAGKKAPPLTEEEARRAHSRRRRNRKKYG. Residues 456–468 show a composition bias toward basic residues; sequence AHSRRRRNRKKYG.

The protein belongs to the TRAFAC class TrmE-Era-EngA-EngB-Septin-like GTPase superfamily. EngA (Der) GTPase family. As to quaternary structure, associates with the 50S ribosomal subunit.

GTPase that plays an essential role in the late steps of ribosome biogenesis. The protein is GTPase Der of Nitrosomonas eutropha (strain DSM 101675 / C91 / Nm57).